The following is a 246-amino-acid chain: Probable phosphatase ASA_1316 (246 aa).

Residues His8, His10, His16, His41, Glu74, His102, His132, Asp193, and His195 each contribute to the Zn(2+) site.

It belongs to the PHP family. Requires Zn(2+) as cofactor.

In Aeromonas salmonicida (strain A449), this protein is Probable phosphatase ASA_1316.